Consider the following 233-residue polypeptide: Small ribosomal subunit protein uS2c (233 aa).

Belongs to the universal ribosomal protein uS2 family.

It is found in the plastid. Its subcellular location is the chloroplast. This is Small ribosomal subunit protein uS2c (rps2) from Staurastrum punctulatum (Green alga).